The sequence spans 630 residues: 1-deoxy-D-xylulose-5-phosphate synthase (630 aa).

Residues H72 and 113-115 (GHS) each bind thiamine diphosphate. Position 144 (D144) interacts with Mg(2+). Residues 145 to 146 (GA), N173, Y284, and E367 contribute to the thiamine diphosphate site. Position 173 (N173) interacts with Mg(2+).

The protein belongs to the transketolase family. DXPS subfamily. Homodimer. It depends on Mg(2+) as a cofactor. Thiamine diphosphate is required as a cofactor.

The enzyme catalyses D-glyceraldehyde 3-phosphate + pyruvate + H(+) = 1-deoxy-D-xylulose 5-phosphate + CO2. It participates in metabolic intermediate biosynthesis; 1-deoxy-D-xylulose 5-phosphate biosynthesis; 1-deoxy-D-xylulose 5-phosphate from D-glyceraldehyde 3-phosphate and pyruvate: step 1/1. In terms of biological role, catalyzes the acyloin condensation reaction between C atoms 2 and 3 of pyruvate and glyceraldehyde 3-phosphate to yield 1-deoxy-D-xylulose-5-phosphate (DXP). The polypeptide is 1-deoxy-D-xylulose-5-phosphate synthase (Bacillus cytotoxicus (strain DSM 22905 / CIP 110041 / 391-98 / NVH 391-98)).